A 236-amino-acid chain; its full sequence is Capsid protein (236 aa).

Residues M1–T46 form a disordered region. The interval M1–S51 is r domain, interaction with RNA. Residues P29–A44 show a composition bias toward pro residues. The segment at E52–Y217 is s domain, virion shell. The p domain, projecting stretch occupies residues R218–H236.

The protein belongs to the icosahedral plant coat protein family. In terms of assembly, homomultimer.

Its subcellular location is the virion. Functionally, capsid protein self-assembles to form an icosahedral capsid with a T=3 symmetry, about 28-34 nm in diameter, and consisting of 180 capsid proteins. The protein is Capsid protein of Zea mays (Maize).